A 70-amino-acid chain; its full sequence is Large ribosomal subunit protein eL43 (70 aa).

Zn(2+) is bound by residues C36, C39, C55, and C58. The C4-type zinc finger occupies 36–58; it reads CPVCKTTGKVVRIASGVWYCKKC.

Belongs to the eukaryotic ribosomal protein eL43 family. Putative zinc-binding subfamily. As to quaternary structure, part of the 50S ribosomal subunit. Requires Zn(2+) as cofactor.

Binds to the 23S rRNA. The chain is Large ribosomal subunit protein eL43 from Sulfurisphaera tokodaii (strain DSM 16993 / JCM 10545 / NBRC 100140 / 7) (Sulfolobus tokodaii).